The following is a 150-amino-acid chain: Natriuretic peptides A (150 aa).

The N-terminal stretch at 1-24 (MSSFTITVSFLLVLVFQFPGQTRA) is a signal peptide. 2 propeptides span residues 25–122 (NPVY…AAPR) and 92–102 (DGGALGRGPWD). Positions 77-100 (LEVPPWTGEVNPAQRDGGALGRGP) are disordered. Ser-128 carries the post-translational modification Phosphoserine. The cysteines at positions 129 and 145 are disulfide-linked.

This sequence belongs to the natriuretic peptide family. As to quaternary structure, homodimer; disulfide-linked antiparallel dimer. The precursor molecule is proteolytically cleaved by CORIN at Arg-122 to produce the atrial natriuretic peptide. Undergoes further proteolytic cleavage by unknown proteases to give rise to long-acting natriuretic peptide, vessel dilator and kaliuretic peptide. Additional processing gives rise to the auriculin and atriopeptin peptides. In the kidneys, alternative processing by an unknown protease results in the peptide urodilatin. Post-translationally, cleavage by MME initiates degradation of the factor and thereby regulates its activity. Degradation by IDE results in reduced activation of NPR1 (in vitro). During IDE degradation, the resulting products can temporarily stimulate NPR2 to produce cGMP, before the fragments are completely degraded and inactivated by IDE (in vitro). In terms of processing, degraded by IDE. Phosphorylation on Ser-128 decreases vasorelaxant activity. Brain (at protein level).

It is found in the secreted. The protein localises to the perikaryon. The protein resides in the cell projection. Hormone that plays a key role in mediating cardio-renal homeostasis, and is involved in vascular remodeling and regulating energy metabolism. Acts by specifically binding and stimulating NPR1 to produce cGMP, which in turn activates effector proteins, such as PRKG1, that drive various biological responses. Regulates vasodilation, natriuresis, diuresis and aldosterone synthesis and is therefore essential for regulating blood pressure, controlling the extracellular fluid volume and maintaining the fluid-electrolyte balance. Also involved in inhibiting cardiac remodeling and cardiac hypertrophy by inducing cardiomyocyte apoptosis and attenuating the growth of cardiomyocytes and fibroblasts. Plays a role in female pregnancy by promoting trophoblast invasion and spiral artery remodeling in uterus, and thus prevents pregnancy-induced hypertension. In adipose tissue, acts in various cGMP- and PKG-dependent pathways to regulate lipid metabolism and energy homeostasis. This includes up-regulating lipid metabolism and mitochondrial oxygen utilization by activating the AMP-activated protein kinase (AMPK), and increasing energy expenditure by acting via MAPK11 to promote the UCP1-dependent thermogenesis of brown adipose tissue. Binds the clearance receptor NPR3 which removes the hormone from circulation. Its function is as follows. May have a role in cardio-renal homeostasis through regulation of natriuresis, diuresis, vasodilation, and inhibiting aldosterone synthesis. In vitro, promotes the production of cGMP and induces vasodilation. May promote natriuresis, at least in part, by enhancing prostaglandin E2 synthesis resulting in the inhibition of renal Na+-K+-ATPase. However reports on the involvement of this peptide in mammal blood volume and blood pressure homeostasis are conflicting; according to a report, in vivo it is not sufficient to activate cGMP and does not inhibit collecting duct transport nor effect diuresis and natriuresis. Appears to bind to specific receptors that are distinct from the receptors bound by atrial natriuretic peptide and vessel dilator. Possibly enhances protein excretion in urine by decreasing proximal tubular protein reabsorption. Functionally, may have a role in cardio-renal homeostasis through regulation of natriuresis, diuresis, and vasodilation. In vitro, promotes the production of cGMP and induces vasodilation. May promote natriuresis, at least in part, by enhancing prostaglandin E2 synthesis resulting in the inhibition of renal Na+-K+-ATPase. However reports on the involvement of this peptide in mammal blood volume and blood pressure homeostasis are conflicting; according to a report it is not sufficient to activate cGMP and does not inhibit collecting duct transport nor effect diuresis and natriuresis. Appears to bind to specific receptors that are distinct from the receptors bound by the atrial natriuretic and long-acting natriuretic peptides. Possibly functions in protein excretion in urine by maintaining the integrity of the proximal tubules and enhancing protein excretion by decreasing proximal tubular protein reabsorption. In terms of biological role, may have a role in cardio-renal homeostasis through regulation of diuresis and inhibiting aldosterone synthesis. In vitro, promotes the production of cGMP and induces vasodilation. May promote natriuresis, at least in part, by enhancing prostaglandin E2 synthesis resulting in the inhibition of renal Na+-K+-ATPase. May have a role in potassium excretion but not sodium excretion (natriuresis). Possibly enhances protein excretion in urine by decreasing proximal tubular protein reabsorption. Hormone produced in the kidneys that appears to be important for maintaining cardio-renal homeostasis. Mediates vasodilation, natriuresis and diuresis primarily in the renal system, in order to maintain the extracellular fluid volume and control the fluid-electrolyte balance. Specifically binds and stimulates cGMP production by renal transmembrane receptors, likely NPR1. Urodilatin not ANP, may be the natriuretic peptide responsible for the regulation of sodium and water homeostasis in the kidney. Its function is as follows. May have a role in cardio-renal homeostasis through regulation of natriuresis and vasodilation. In vivo promotes natriuresis and in vitro, vasodilates renal artery strips. Functionally, may have a role in cardio-renal homeostasis through regulation of regulation of natriuresis and vasodilation. In vivo promotes natriuresis. In vitro, vasodilates intestinal smooth muscle but not smooth muscle strips. In terms of biological role, may have a role in cardio-renal homeostasis through regulation of natriuresis and vasodilation. In vivo promotes natriuresis. In vitro, selectively vasodilates intestinal and vascular smooth muscle strips. May have a role in cardio-renal homeostasis through regulation of natriuresis and vasodilation. In vivo promotes natriuresis. In vitro, selectively vasodilates intestinal smooth muscle but not vascular smooth muscle strips. This Sus scrofa (Pig) protein is Natriuretic peptides A (NPPA).